We begin with the raw amino-acid sequence, 409 residues long: Imidazolonepropionase (409 aa).

Fe(3+)-binding residues include His70 and His72. His70 and His72 together coordinate Zn(2+). 4-imidazolone-5-propanoate is bound by residues Arg79, Tyr137, and His164. Tyr137 provides a ligand contact to N-formimidoyl-L-glutamate. A Fe(3+)-binding site is contributed by His225. His225 contributes to the Zn(2+) binding site. Gln228 contacts 4-imidazolone-5-propanoate. Positions 314 and 316 each coordinate N-formimidoyl-L-glutamate. Thr317 provides a ligand contact to 4-imidazolone-5-propanoate.

This sequence belongs to the metallo-dependent hydrolases superfamily. HutI family. Zn(2+) serves as cofactor. Fe(3+) is required as a cofactor.

The protein localises to the cytoplasm. It catalyses the reaction 4-imidazolone-5-propanoate + H2O = N-formimidoyl-L-glutamate. It participates in amino-acid degradation; L-histidine degradation into L-glutamate; N-formimidoyl-L-glutamate from L-histidine: step 3/3. Functionally, catalyzes the hydrolytic cleavage of the carbon-nitrogen bond in imidazolone-5-propanoate to yield N-formimidoyl-L-glutamate. It is the third step in the universal histidine degradation pathway. The protein is Imidazolonepropionase of Paenarthrobacter aurescens (strain TC1).